Here is a 200-residue protein sequence, read N- to C-terminus: MDRTGIFAGDDPFAIAAGWLAEAEPQEPNDPNAIALATVDAAGLPNVRMVLLKEIEAEAFVFYTNYGSQKAVEIETSGKAAFVLHWKSLRRQIRVRGLVEREEGAQADAYYASRSLKSRLGAWASEQSRPLASRTSLLAEVARVTARFGTNPPRPAFWGGFRIRPLEIEFWADGAFRLHDRFRWRRNSLSDGWSIERLNP.

FMN contacts are provided by residues 48–53 (RMVLLK), 63–64 (YT), K70, and Q92. K53 lines the substrate pocket. Residues Y110, R114, and S118 each contribute to the substrate site. Residues 127–128 (QS) and W171 contribute to the FMN site. 177–179 (RLH) lines the substrate pocket. R181 is an FMN binding site.

This sequence belongs to the pyridoxamine 5'-phosphate oxidase family. As to quaternary structure, homodimer. Requires FMN as cofactor.

It carries out the reaction pyridoxamine 5'-phosphate + O2 + H2O = pyridoxal 5'-phosphate + H2O2 + NH4(+). The enzyme catalyses pyridoxine 5'-phosphate + O2 = pyridoxal 5'-phosphate + H2O2. The protein operates within cofactor metabolism; pyridoxal 5'-phosphate salvage; pyridoxal 5'-phosphate from pyridoxamine 5'-phosphate: step 1/1. Its pathway is cofactor metabolism; pyridoxal 5'-phosphate salvage; pyridoxal 5'-phosphate from pyridoxine 5'-phosphate: step 1/1. Its function is as follows. Catalyzes the oxidation of either pyridoxine 5'-phosphate (PNP) or pyridoxamine 5'-phosphate (PMP) into pyridoxal 5'-phosphate (PLP). The protein is Pyridoxine/pyridoxamine 5'-phosphate oxidase of Cereibacter sphaeroides (strain ATCC 17023 / DSM 158 / JCM 6121 / CCUG 31486 / LMG 2827 / NBRC 12203 / NCIMB 8253 / ATH 2.4.1.) (Rhodobacter sphaeroides).